Reading from the N-terminus, the 121-residue chain is Phospholipase A2 homolog EPL_00195 (121 aa).

7 disulfide bridges follow: Cys25-Cys114, Cys27-Cys43, Cys42-Cys94, Cys48-Cys121, Cys49-Cys87, Cys56-Cys80, and Cys74-Cys85. The segment at 104 to 116 (KKYRIYPNFLCRG) is important for membrane-damaging activities in eukaryotes and bacteria; heparin-binding.

The protein belongs to the phospholipase A2 family. Group II subfamily. S49 sub-subfamily. Monomer. As to expression, expressed by the venom gland.

Its subcellular location is the secreted. Its function is as follows. Snake venom phospholipase A2 homolog that lacks enzymatic activity. Shows high myotoxin activities and displays edema-inducing activities. Has cytotoxic activities against HUVEC cells (LC(50)=2.5 uL) and human lung adenocarcinoma A549 cells (LC(50)=2.9 uL). The protein is Phospholipase A2 homolog EPL_00195 of Echis pyramidum leakeyi (Leakey's carpet viper).